The following is a 260-amino-acid chain: Flagellar basal-body rod protein FlgG (260 aa).

Belongs to the flagella basal body rod proteins family. In terms of assembly, the basal body constitutes a major portion of the flagellar organelle and consists of four rings (L,P,S, and M) mounted on a central rod. The rod consists of about 26 subunits of FlgG in the distal portion, and FlgB, FlgC and FlgF are thought to build up the proximal portion of the rod with about 6 subunits each.

It is found in the bacterial flagellum basal body. This chain is Flagellar basal-body rod protein FlgG (flgG), found in Salmonella typhi.